The primary structure comprises 180 residues: Stathmin-3 (180 aa).

The region spanning 38–180 (GDMEVKQLDK…NKEQREEISG (143 aa)) is the SLD domain. Positions 60-74 (SPSDLSPESPILSSP) are enriched in low complexity. Residues 60-82 (SPSDLSPESPILSSPPKKKDLSL) form a disordered region. A coiled-coil region spans residues 75–179 (PKKKDLSLEE…RNKEQREEIS (105 aa)).

Belongs to the stathmin family.

The polypeptide is Stathmin-3 (STMN3) (Gallus gallus (Chicken)).